A 55-amino-acid chain; its full sequence is Large ribosomal subunit protein eL37 (55 aa).

Cys-20, Cys-23, Cys-35, and Cys-38 together coordinate Zn(2+). The C4-type zinc finger occupies 20–38 (CRRCGKNSYHKRHHRCSSC).

The protein belongs to the eukaryotic ribosomal protein eL37 family. It depends on Zn(2+) as a cofactor.

Functionally, binds to the 23S rRNA. This is Large ribosomal subunit protein eL37 from Cenarchaeum symbiosum (strain A).